The sequence spans 395 residues: [LysW]-aminoadipate semialdehyde transaminase (395 aa).

Residues 113–114 (GT) and Phe140 each bind pyridoxal 5'-phosphate. Substrate is bound at residue Arg143. 225–228 (DEIQ) provides a ligand contact to pyridoxal 5'-phosphate. Lys254 carries the post-translational modification N6-(pyridoxal phosphate)lysine. Thr282 is a substrate binding site. Thr283 provides a ligand contact to pyridoxal 5'-phosphate.

This sequence belongs to the class-III pyridoxal-phosphate-dependent aminotransferase family. LysJ subfamily. As to quaternary structure, homodimer. Requires pyridoxal 5'-phosphate as cofactor.

The protein localises to the cytoplasm. The catalysed reaction is [amino-group carrier protein]-C-terminal-gamma-(L-lysyl)-L-glutamate + 2-oxoglutarate = [amino-group carrier protein]-C-terminal-N-(1-carboxy-5-oxopentan-1-yl)-L-glutamine + L-glutamate. It functions in the pathway amino-acid biosynthesis; L-lysine biosynthesis via AAA pathway; L-lysine from L-alpha-aminoadipate (Thermus route): step 4/5. In terms of biological role, catalyzes the transfer of the amino group of L-glutamate to [LysW]-aminoadipate 6-semialdehyde, generating [LysW]-gamma-L-lysine. The chain is [LysW]-aminoadipate semialdehyde transaminase from Thermus thermophilus (strain ATCC 27634 / DSM 579 / HB8).